Here is a 310-residue protein sequence, read N- to C-terminus: Transcription initiation factor IIB (310 aa).

2 consecutive repeat copies span residues 126 to 209 and 220 to 301.

Belongs to the TFIIB family.

Stabilizes TBP binding to an archaeal box-A promoter. Also responsible for recruiting RNA polymerase II to the pre-initiation complex (DNA-TBP-TFIIB). The polypeptide is Transcription initiation factor IIB (Pyrodictium occultum).